A 475-amino-acid polypeptide reads, in one-letter code: Ankyrin repeat, SAM and basic leucine zipper domain-containing protein 1 (475 aa).

The interval M1–W25 is disordered. 3 positions are modified to phosphoserine: S17, S18, and S20. 6 ANK repeats span residues E45 to S74, Y78 to F107, D110 to V144, R148 to T177, N181 to L210, and D214 to G243. Positions S272–Q334 constitute an SAM domain.

In terms of assembly, interacts with DDX4, PIWIL1, RANBP9 and TDRD1. Expressed exclusively in the testis and ovary and at higher levels in the adult testis compared with the adult ovary.

The protein localises to the cytoplasm. In terms of biological role, plays a central role during spermatogenesis by repressing transposable elements and preventing their mobilization, which is essential for the germline integrity. Acts via the piRNA metabolic process, which mediates the repression of transposable elements during meiosis by forming complexes composed of piRNAs and Piwi proteins and governs the methylation and subsequent repression of transposons. Its association with pi-bodies suggests a participation in the primary piRNAs metabolic process. Required prior to the pachytene stage to facilitate the production of multiple types of piRNAs, including those associated with repeats involved in the regulation of retrotransposons. May act by mediating protein-protein interactions during germ cell maturation. The chain is Ankyrin repeat, SAM and basic leucine zipper domain-containing protein 1 from Homo sapiens (Human).